Reading from the N-terminus, the 346-residue chain is UPF0324 membrane protein FN0533 (346 aa).

A run of 10 helical transmembrane segments spans residues 5–22 (LYGI…WKLG), 27–49 (LVGG…KNRA), 62–81 (VLQY…TIIS), 86–108 (SLPI…AKLI), 115–137 (VILI…APVI), 147–169 (AISV…GDIL), 216–233 (LTRT…AVYN), 248–270 (IFPM…NYFI), 283–305 (INNV…MVAI), and 315–337 (ILSG…LVSI).

Belongs to the UPF0324 family.

It localises to the cell membrane. This chain is UPF0324 membrane protein FN0533, found in Fusobacterium nucleatum subsp. nucleatum (strain ATCC 25586 / DSM 15643 / BCRC 10681 / CIP 101130 / JCM 8532 / KCTC 2640 / LMG 13131 / VPI 4355).